Reading from the N-terminus, the 154-residue chain is Histidine-containing phosphotransfer protein 1 (154 aa).

Position 1 is an N-acetylmethionine (methionine 1). Positions asparagine 38–serine 143 constitute an HPt domain. A Phosphohistidine modification is found at histidine 79.

In terms of assembly, interacts with the B-type response regulators ARR1, ARR2, ARR4 and ARR9. Binds to ETR1, AHK2, AHK3, AHK4, AHK5 and FBR12. In terms of processing, two-component system major event consists of a His-to-Asp phosphorelay between a sensor histidine kinase (HK) and a response regulator (RR). In plants, the His-to-Asp phosphorelay involves an additional intermediate named Histidine-containing phosphotransfer protein (HPt). This multistep phosphorelay consists of a His-Asp-His-Asp sequential transfer of a phosphate group between first a His and an Asp of the HK protein, followed by the transfer to a conserved His of the HPt protein and finally the transfer to an Asp in the receiver domain of the RR protein. In terms of tissue distribution, strongly expressed in roots.

The protein resides in the cytoplasm. It localises to the cytosol. It is found in the nucleus. In terms of biological role, functions as a two-component phosphorelay mediators between cytokinin sensor histidine kinases and response regulator (B-type ARRs). Plays an important role in propagating cytokinin signal transduction through the multistep His-to-Asp phosphorelay. This chain is Histidine-containing phosphotransfer protein 1 (AHP1), found in Arabidopsis thaliana (Mouse-ear cress).